Here is an 877-residue protein sequence, read N- to C-terminus: MAAERYNPRVAEAHWQKVWEEDRTFETDNSDSREKYYVLEMFPYPSGRIHMGHVRNYAMGDVVARYKRAKGFNVLHPMGWDAFGMPAENAAMQNKVHPKEWTYQNIATMRSQLKSMGLSLDWAREFATCDVEYYHRQQMLFIDLFEKGLVTRKTSKVNWDPVDNTVLANEQVVDGRGWRSGALVEQRELTQWFFKITDFSEELLAGLDTLDQWPEKVRLMQRNWIGKSEGLQVRFTLDGKTAPEGFSEVEVYTTRPDTLFGAAFVGISADHPLAKKLAENNASLTGFIEECHQHGTSLAALETAEKKGFDTGVKVKHPFDENWELPVYVANFVLMEYGTGAVFGCPAHDQRDLDFANKYKLKVTPVVMPKGEDAAGFSIGETAYTDDGVMINSRFLDGMTPEAAFNEVANRLEQTSLGNSPQASRKVQFRLRDWGISRQRYWGCPIPMIHCESCGVNPVPRADLPVKLPDDVEFDRPGNPLDRHATWRHVKCPKCGADARRETDTMDTFVDSSWYYARFTAPWENEPTDRKVADHWLPVDQYIGGIEHAILHLLYSRFFTRAMKVAGHVGIDEPFKGLFTQGMVVHETYKANGQWVAPADIRIEETDGKRSAALLSTGEPVEIGSIEKMSKSKKNVVDPDDIIASYGADTARWFMLSDSPPERDVIWTEAGAEGAHRFVQRVWRLVAEAAEHLKDVAPKTGTQGEALVVSKAAHKAVKAVGDDIEKLAFNRGVARLYELVNTAAASLQQVASGNADDELKSAVRDVTEKLILMLAPMMPHLAEQCLAVLGGKIAGRETLVARSAWPEFDPALVVENEIVMPVQINGKKRGDLTIARDADQASIQQAVLELDFVKAALNGSSPKKVIVVPQRIVNVVA.

Residues 43–53 carry the 'HIGH' region motif; that stretch reads PYPSGRIHMGH. Positions 628 to 632 match the 'KMSKS' region motif; sequence KMSKS. Lysine 631 is an ATP binding site.

The protein belongs to the class-I aminoacyl-tRNA synthetase family.

It is found in the cytoplasm. It carries out the reaction tRNA(Leu) + L-leucine + ATP = L-leucyl-tRNA(Leu) + AMP + diphosphate. This Brucella anthropi (strain ATCC 49188 / DSM 6882 / CCUG 24695 / JCM 21032 / LMG 3331 / NBRC 15819 / NCTC 12168 / Alc 37) (Ochrobactrum anthropi) protein is Leucine--tRNA ligase.